A 194-amino-acid polypeptide reads, in one-letter code: MISRLTGKLVEKNPPQIVIDVNGVGYEADVSMQTFYNLPPVGESVQLFTQLIIREDAHLLFGFATAEERKTFRQLIKVGGIGAKTALGILSAMTADELAQAVAEEDVKRLSSAPGIGKKTAERMVLELRGKLVAHTVTDGLFAAAPAADETEDIVSTLLALGYSEREAKAAVKGVPEGTDVGEGVRLALKNLLK.

The domain I stretch occupies residues 1–64; the sequence is MISRLTGKLV…EDAHLLFGFA (64 aa). The segment at 65–143 is domain II; sequence TAEERKTFRQ…AHTVTDGLFA (79 aa). The segment at 144 to 147 is flexible linker; the sequence is AAPA. The segment at 147–194 is domain III; sequence AADETEDIVSTLLALGYSEREAKAAVKGVPEGTDVGEGVRLALKNLLK.

This sequence belongs to the RuvA family. In terms of assembly, homotetramer. Forms an RuvA(8)-RuvB(12)-Holliday junction (HJ) complex. HJ DNA is sandwiched between 2 RuvA tetramers; dsDNA enters through RuvA and exits via RuvB. An RuvB hexamer assembles on each DNA strand where it exits the tetramer. Each RuvB hexamer is contacted by two RuvA subunits (via domain III) on 2 adjacent RuvB subunits; this complex drives branch migration. In the full resolvosome a probable DNA-RuvA(4)-RuvB(12)-RuvC(2) complex forms which resolves the HJ.

The protein localises to the cytoplasm. Its function is as follows. The RuvA-RuvB-RuvC complex processes Holliday junction (HJ) DNA during genetic recombination and DNA repair, while the RuvA-RuvB complex plays an important role in the rescue of blocked DNA replication forks via replication fork reversal (RFR). RuvA specifically binds to HJ cruciform DNA, conferring on it an open structure. The RuvB hexamer acts as an ATP-dependent pump, pulling dsDNA into and through the RuvAB complex. HJ branch migration allows RuvC to scan DNA until it finds its consensus sequence, where it cleaves and resolves the cruciform DNA. This chain is Holliday junction branch migration complex subunit RuvA, found in Neisseria meningitidis serogroup C (strain 053442).